A 690-amino-acid polypeptide reads, in one-letter code: Wilms tumor protein 1-interacting protein homolog (690 aa).

Disordered stretches follow at residues 151-316 (MSAT…VSPR) and 328-372 (TLGS…PRSS). The segment covering 152 to 186 (SATSPRSSMASSASSSQEHSKYSSPRSSISSNALS) has biased composition (low complexity). 4 stretches are compositionally biased toward polar residues: residues 204 to 214 (EKYTSPRSSLG), 223 to 233 (PRSSYASTTSD), 240 to 261 (PRASLTSYDCGSKPSSNRTSGI), and 272 to 292 (PRSSTASQYSCTTSPRSSYSD). Residues 335–357 (SVVSPRSSISSHSSRSSRSSRGS) are compositionally biased toward low complexity. 3 LIM zinc-binding domains span residues 479-540 (GICI…SGFQ), 544-603 (DKCF…TVFA), and 604-673 (PKCA…RLSV).

Belongs to the zyxin/ajuba family. In terms of assembly, interacts with prickle3.

The protein resides in the cell junction. It localises to the adherens junction. The protein localises to the nucleus. In terms of biological role, may monitor slit diaphragm protein assembly, a specialized adherens junction characteristic of podocytes. In case of podocyte injury, it shuttles into the nucleus and acts as a transcription regulator. Plays a role in the regulation of cell morphology and cytoskeletal organization. Acts as a transcriptional corepressor for snai1 and snai2/slug and plays a role in regulating neural crest development. Involved in the organization of the basal body. Involved in cilia growth and positioning. This chain is Wilms tumor protein 1-interacting protein homolog (wtip), found in Xenopus laevis (African clawed frog).